Here is a 534-residue protein sequence, read N- to C-terminus: MGHQESPLARAPAGGAAYVKRLCKGLSWREHVESHGSLGAQASPASAAAAEGSATRRARAATSRAARSRRQPGPGADHPQAGAPGGKRAARKWRCAGQVTIQGPAPPRPRAGRRDEAGGARAAPLLLPPPPAAMETGKDGARRGTQSPERKRRSPVPRAPSTKLRPAAAARAMDPVAAEAPGEAFLARRRPEGGGGSARPRYSLLAEIGRGSYGVVYEAVAGRSGARVAVKKIRCDAPENVELALAEFWALTSLKRRHQNVVQFEECVLQRNGLAQRMSHGNKSSQLYLRLVETSLKGERILGYAEEPCYLWFVMEFCEGGDLNQYVLSRRPDPATNKSFMLQLTSAIAFLHKNHIVHRDLKPDNILITERSGTPILKVADFGLSKVCAGLAPRGKEGNQDNKNVNVNKYWLSSACGSDFYMAPEVWEGHYTAKADIFALGIIIWAMIERITFIDSETKKELLGTYIKQGTEIVPVGEALLENPKMELHIPQKRRTSMSEGIKQLLKDMLAANPQDRPDAFELETRMDQVTCAA.

The interval 32–176 (VESHGSLGAQ…AAAARAMDPV (145 aa)) is disordered. Low complexity-rich tracts occupy residues 39–65 (GAQA…TSRA) and 166–176 (PAAAARAMDPV). Residues 202 to 530 (YSLLAEIGRG…FELETRMDQV (329 aa)) enclose the Protein kinase domain. Residues 208–216 (IGRGSYGVV) and Lys231 contribute to the ATP site. The Proton acceptor role is filled by Asp360.

Belongs to the protein kinase superfamily. Ser/Thr protein kinase family. Interacts with PDLIM1/CLP-36. Autophosphorylated. In terms of tissue distribution, expressed in testis.

It localises to the nucleus. The protein localises to the nucleolus. Its subcellular location is the cytoplasm. The enzyme catalyses L-seryl-[protein] + ATP = O-phospho-L-seryl-[protein] + ADP + H(+). The catalysed reaction is L-threonyl-[protein] + ATP = O-phospho-L-threonyl-[protein] + ADP + H(+). The sequence is that of Serine/threonine-protein kinase 35 (STK35) from Homo sapiens (Human).